Consider the following 344-residue polypeptide: HTH-type transcriptional regulator XC_2801 (344 aa).

The region spanning 3–60 (HDLNDTLIFVKVVEQGSFIAAANSLGLPKTTVSRKVQELETRLGARLLHRTTRRIGLT) is the HTH lysR-type domain. Positions 20 to 39 (FIAAANSLGLPKTTVSRKVQ) form a DNA-binding region, H-T-H motif.

This sequence belongs to the LysR transcriptional regulatory family. Interacts with the cyclic di-GMP effector XC_3703.

Its activity is regulated as follows. Activity is regulated by cyclic di-GMP. Cyclic di-GMP specifically binds to XC_3703, which inhibits the interaction of the XC_2801-XC_3703 complex with DNA and prevents the transcription of the target genes. Functionally, transcriptional regulator that directly or indirectly regulates the expression of virulence-related genes, including flhB, aaeA, fliL and flgG. Binds to the promoter of the target genes only in the presence of XC_3703. The chain is HTH-type transcriptional regulator XC_2801 from Xanthomonas campestris pv. campestris (strain 8004).